The primary structure comprises 347 residues: Actin-like protein MamK (347 aa).

ATP contacts are provided by residues Lys-9, 20-21 (TS), and Asp-76. Mg(2+) is bound at residue Glu-143. ATP contacts are provided by residues 164–166 (AGT), 218–222 (KEQFS), and Gly-289.

The protein belongs to the FtsA/MreB family. MamK subfamily. Forms cytoplasmic filaments. Filaments are parallel (polar) and double-helical. MamK subunits from each of the two strands are juxtaposed, each monomer binds ADP. At cell poles and septa interacts with methyl-accepting chemotaxis protein Amb0944 (MCP10). Forms filaments with MamK-like protein.

The protein localises to the cytoplasm. It is found in the cytoskeleton. Its subcellular location is the magnetosome membrane. It carries out the reaction ATP + H2O = ADP + phosphate + H(+). Its activity is regulated as follows. Filament turnover is promoted by MamJ and/or LimJ which have overlapping function; at least one other protein is required for turnover. MamK filament dynamics are probably required for the assembly or maintenance of the magnetosome chain. Functionally, protein with ATPase activity which forms dynamic cytoplasmic filaments (probably with paralog MamK-like) that organize magnetosomes into long chains running parallel to the long axis of the cell. Turnover of MamK filaments is probably promoted by MamK-like, which provides a monomer pool. Forms twisted filaments in the presence of ATP or GTP. Serves to close gaps between magnetosomes in the chain. Interaction with MCP10 is involved in controlling the response to magnetic fields, possibly by controlling flagellar rotation. Expression in E.coli yields a filament in the cell's longitudinal axis; the protein nucleates at several sites and one extremity of the filament is located at the cell pole. This is Actin-like protein MamK (mamK) from Paramagnetospirillum magneticum (strain ATCC 700264 / AMB-1) (Magnetospirillum magneticum).